The following is a 559-amino-acid chain: DNA ligase (559 aa).

Residue Glu-247 coordinates ATP. The N6-AMP-lysine intermediate role is filled by Lys-249. ATP is bound by residues Arg-254, Arg-269, Glu-299, Phe-339, Arg-414, and Lys-420.

The protein belongs to the ATP-dependent DNA ligase family. In terms of assembly, monomer. Mg(2+) serves as cofactor.

The enzyme catalyses ATP + (deoxyribonucleotide)n-3'-hydroxyl + 5'-phospho-(deoxyribonucleotide)m = (deoxyribonucleotide)n+m + AMP + diphosphate.. It carries out the reaction NAD(+) + (deoxyribonucleotide)n-3'-hydroxyl + 5'-phospho-(deoxyribonucleotide)m = (deoxyribonucleotide)n+m + AMP + beta-nicotinamide D-nucleotide.. DNA ligase that seals nicks in double-stranded DNA during DNA replication, DNA recombination and DNA repair. Can also use NAD, but less efficiently than ATP. This is DNA ligase from Thermococcus kodakarensis (strain ATCC BAA-918 / JCM 12380 / KOD1) (Pyrococcus kodakaraensis (strain KOD1)).